The primary structure comprises 215 residues: 3-demethoxyubiquinol 3-hydroxylase (215 aa).

Fe cation is bound by residues E64, E94, H97, E146, E178, and H181.

Belongs to the COQ7 family. The cofactor is Fe cation.

Its subcellular location is the cell membrane. It carries out the reaction a 5-methoxy-2-methyl-3-(all-trans-polyprenyl)benzene-1,4-diol + AH2 + O2 = a 3-demethylubiquinol + A + H2O. It functions in the pathway cofactor biosynthesis; ubiquinone biosynthesis. In terms of biological role, catalyzes the hydroxylation of 2-nonaprenyl-3-methyl-6-methoxy-1,4-benzoquinol during ubiquinone biosynthesis. The sequence is that of 3-demethoxyubiquinol 3-hydroxylase from Pseudomonas aeruginosa (strain LESB58).